The following is a 305-amino-acid chain: Glycerol-3-phosphate dehydrogenase [NAD(P)+] (305 aa).

NADPH is bound by residues Phe-10, Arg-29, and Lys-87. Residues Lys-87, Gly-115, and Ser-117 each coordinate sn-glycerol 3-phosphate. An NADPH-binding site is contributed by Ala-119. Positions 170, 223, 233, 234, and 235 each coordinate sn-glycerol 3-phosphate. Catalysis depends on Lys-170, which acts as the Proton acceptor. NADPH is bound at residue Arg-234. Glu-255 is an NADPH binding site.

The protein belongs to the NAD-dependent glycerol-3-phosphate dehydrogenase family.

It is found in the cytoplasm. It catalyses the reaction sn-glycerol 3-phosphate + NAD(+) = dihydroxyacetone phosphate + NADH + H(+). It carries out the reaction sn-glycerol 3-phosphate + NADP(+) = dihydroxyacetone phosphate + NADPH + H(+). It functions in the pathway membrane lipid metabolism; glycerophospholipid metabolism. In terms of biological role, catalyzes the reduction of the glycolytic intermediate dihydroxyacetone phosphate (DHAP) to sn-glycerol 3-phosphate (G3P), the key precursor for phospholipid synthesis. The sequence is that of Glycerol-3-phosphate dehydrogenase [NAD(P)+] from Cereibacter sphaeroides (strain ATCC 17023 / DSM 158 / JCM 6121 / CCUG 31486 / LMG 2827 / NBRC 12203 / NCIMB 8253 / ATH 2.4.1.) (Rhodobacter sphaeroides).